Reading from the N-terminus, the 117-residue chain is Glycine cleavage system H-like protein (117 aa).

Residues 21–103 enclose the Lipoyl-binding domain; sequence IVKLGLSSQM…ESEGWFVVLQ (83 aa). Lys-62 is subject to N6-lipoyllysine.

This sequence belongs to the GcvH family. It depends on (R)-lipoate as a cofactor.

The protein is Glycine cleavage system H-like protein of Chlamydia trachomatis serovar D (strain ATCC VR-885 / DSM 19411 / UW-3/Cx).